The sequence spans 222 residues: Pre-mRNA cleavage factor Im 25 kDa subunit 1 (222 aa).

The region spanning 67 to 194 (GLRTCVEAVL…KLLAVPLCQL (128 aa)) is the Nudix hydrolase domain. Residues 94–96 (SIF) form an interaction with RNA region. A Nudix box motif is present at residues 101-122 (GRLRPGESDIEGLKRKLASKLS).

The protein belongs to the Nudix hydrolase family. CPSF5 subfamily. Homodimer. Component of the cleavage factor Im (CFIm) complex. Forms a complex with cleavage and polyadenylation specificity factor (CPSF) subunits FIPS5.

The protein resides in the nucleus. Component of the cleavage factor Im (CFIm) complex that plays a key role in pre-mRNA 3'-processing. Involved in association with CPSF6 or CPSF7 in pre-MRNA 3'-end poly(A) site cleavage and poly(A) addition. NUDT21/CPSF5 binds to cleavage and polyadenylation RNA substrates. The homodimer mediates simultaneous sequence-specific recognition of two 5'-UGUA-3' elements within the pre-mRNA. Binds to, but does not hydrolyze mono- and di-adenosine nucleotides. May have a role in mRNA export. The sequence is that of Pre-mRNA cleavage factor Im 25 kDa subunit 1 from Arabidopsis thaliana (Mouse-ear cress).